We begin with the raw amino-acid sequence, 669 residues long: Protein ENTREP3 (669 aa).

Helical transmembrane passes span 34–54 (LLTL…FSMV), 67–87 (SCPS…IVSW), and 91–111 (FTLV…LSMA). Asn-160 carries an N-linked (GlcNAc...) asparagine glycan. Residues 174 to 194 (LFSVCGLTICAAIICTLSAIV) traverse the membrane as a helical segment. Ser-359 and Ser-390 each carry phosphoserine. Disordered stretches follow at residues 387-420 (FEDS…PTAA), 445-502 (PRGG…TTSS), and 550-571 (RSAE…SGPT). The segment covering 399–408 (AARSYSCSAP) has biased composition (low complexity). Position 494 is a phosphoserine (Ser-494). Ser-575 bears the Phosphoserine mark. The interval 597 to 624 (RRSPDPTGTGAHGYKQVRRSPWGRPGRE) is disordered.

It belongs to the ENTREP family. May interact with WWOX.

The protein localises to the membrane. The sequence is that of Protein ENTREP3 from Mus musculus (Mouse).